Reading from the N-terminus, the 664-residue chain is DNA ligase (664 aa).

Residues 31–35, 80–81, and E110 each bind NAD(+); these read DSTYD and SL. K112 functions as the N6-AMP-lysine intermediate in the catalytic mechanism. 4 residues coordinate NAD(+): R133, E167, K282, and K306. Positions 400, 403, 418, and 423 each coordinate Zn(2+). In terms of domain architecture, BRCT spans 583-664; sequence QSNAPLAGKT…LLEELAKYEG (82 aa).

Belongs to the NAD-dependent DNA ligase family. LigA subfamily. Mg(2+) is required as a cofactor. Requires Mn(2+) as cofactor.

The enzyme catalyses NAD(+) + (deoxyribonucleotide)n-3'-hydroxyl + 5'-phospho-(deoxyribonucleotide)m = (deoxyribonucleotide)n+m + AMP + beta-nicotinamide D-nucleotide.. Functionally, DNA ligase that catalyzes the formation of phosphodiester linkages between 5'-phosphoryl and 3'-hydroxyl groups in double-stranded DNA using NAD as a coenzyme and as the energy source for the reaction. It is essential for DNA replication and repair of damaged DNA. This chain is DNA ligase, found in Exiguobacterium sibiricum (strain DSM 17290 / CCUG 55495 / CIP 109462 / JCM 13490 / 255-15).